The primary structure comprises 201 residues: Small ribosomal subunit protein uS4 (201 aa).

The 61-residue stretch at 91-151 (ARLDNVIYRA…DRSRSMLWFD (61 aa)) folds into the S4 RNA-binding domain.

This sequence belongs to the universal ribosomal protein uS4 family. In terms of assembly, part of the 30S ribosomal subunit. Contacts protein S5. The interaction surface between S4 and S5 is involved in control of translational fidelity.

Its function is as follows. One of the primary rRNA binding proteins, it binds directly to 16S rRNA where it nucleates assembly of the body of the 30S subunit. With S5 and S12 plays an important role in translational accuracy. The protein is Small ribosomal subunit protein uS4 of Corynebacterium urealyticum (strain ATCC 43042 / DSM 7109).